The sequence spans 602 residues: T-box transcription factor TBX15 (602 aa).

The disordered stretch occupies residues 43 to 95 (SMEALSPAGPLGDTDDPATHGLEPHPDSEQSTGSDSEVLTERTSCSFSTHTDL). A compositionally biased stretch (polar residues) spans 71–94 (EQSTGSDSEVLTERTSCSFSTHTD). The segment at residues 122–304 (LWKRFHDIGT…RNPFAKGFRD (183 aa)) is a DNA-binding region (T-box). Thr330 is modified (phosphothreonine). 2 disordered regions span residues 338–369 (QKQQ…LSPS) and 425–444 (QSGT…QRTP). Low complexity predominate over residues 346-369 (GTSPTTSSTGTPSPSASSHLLSPS).

As to quaternary structure, can form a heterodimer with TBX18.

It is found in the nucleus. Probable transcriptional regulator involved in the development of the skeleton of the limb, vertebral column and head. Acts by controlling the number of mesenchymal precursor cells and chondrocytes. The sequence is that of T-box transcription factor TBX15 (Tbx15) from Mus musculus (Mouse).